The sequence spans 749 residues: 5-methyltetrahydropteroyltriglutamate--homocysteine methyltransferase (749 aa).

Residues 15–18 (RELK) and lysine 114 each bind 5-methyltetrahydropteroyltri-L-glutamate. L-homocysteine is bound by residues 425 to 427 (IGS) and glutamate 478. Residues 425 to 427 (IGS) and glutamate 478 contribute to the L-methionine site. A 5-methyltetrahydropteroyltri-L-glutamate-binding site is contributed by tryptophan 555. L-homocysteine is bound at residue aspartate 593. Residue aspartate 593 participates in L-methionine binding. Position 599 (glutamate 599) interacts with 5-methyltetrahydropteroyltri-L-glutamate. Zn(2+)-binding residues include histidine 636, cysteine 638, and glutamate 660. Histidine 689 acts as the Proton donor in catalysis. A Zn(2+)-binding site is contributed by cysteine 721.

The protein belongs to the vitamin-B12 independent methionine synthase family. Requires Zn(2+) as cofactor.

It carries out the reaction 5-methyltetrahydropteroyltri-L-glutamate + L-homocysteine = tetrahydropteroyltri-L-glutamate + L-methionine. It functions in the pathway amino-acid biosynthesis; L-methionine biosynthesis via de novo pathway; L-methionine from L-homocysteine (MetE route): step 1/1. Catalyzes the transfer of a methyl group from 5-methyltetrahydrofolate to homocysteine resulting in methionine formation. The sequence is that of 5-methyltetrahydropteroyltriglutamate--homocysteine methyltransferase from Streptococcus thermophilus (strain ATCC BAA-491 / LMD-9).